The chain runs to 193 residues: V-type sodium ATPase subunit E (193 aa).

It belongs to the V-ATPase E subunit family. The N-terminus is blocked.

Functionally, involved in ATP-driven sodium extrusion. This Enterococcus hirae (strain ATCC 9790 / DSM 20160 / JCM 8729 / LMG 6399 / NBRC 3181 / NCIMB 6459 / NCDO 1258 / NCTC 12367 / WDCM 00089 / R) protein is V-type sodium ATPase subunit E (ntpE).